Here is a 238-residue protein sequence, read N- to C-terminus: Dolichyldiphosphatase 1 (238 aa).

The next 4 membrane-spanning stretches (helical) occupy residues 33 to 53 (LAYL…LIIF), 100 to 120 (PSSH…FLYL), 130 to 150 (FLDL…AFLV), and 162 to 182 (WSQV…WFII).

Belongs to the dolichyldiphosphatase family. Widely expressed with highest levels in brain, kidney, lung and intestine.

Its subcellular location is the endoplasmic reticulum membrane. The enzyme catalyses a di-trans,poly-cis-dolichyl diphosphate + H2O = a di-trans,poly-cis-dolichyl phosphate + phosphate + H(+). The protein operates within protein modification; protein glycosylation. Functionally, required for efficient N-glycosylation. Necessary for maintaining optimal levels of dolichol-linked oligosaccharides. Hydrolyzes dolichyl pyrophosphate at a very high rate and dolichyl monophosphate at a much lower rate. Does not act on phosphatidate. In Mus musculus (Mouse), this protein is Dolichyldiphosphatase 1 (Dolpp1).